We begin with the raw amino-acid sequence, 831 residues long: MTSSPSVENGGSGSSGSSALLGCMQQFKLFETQANFYMIGWNGSGVYRILKIDRLEASELNLREDSTAYTKKECYELLKRIHEGNKATGGLKLVTVCYGIIGFIKFLGPYYMLLITERREIGEICGHIVYEVSKSDMIALQHSSVLCNTANLRDENRYKRLLCMVDLTKDFFFSYSYNIMRSFQKNICDHESGGTLYKKMFVWNEFLTRGTRHHLRNTLWTVALVYGFFKQTILSEAGRNFKLTLIARRSRHNAGTRYLKRGINESGNVANDVETEQIVSEDVPVDRPMQISSVVQNRGSIPLFWSQETSRMKVKPDIVLSKRDLNYEATRVHFENLVERYGVPIIILNLIKTNERKPRESILRAEFANAIDFINKDLPEENRLRFLHWDLHKHFHSKTENVLALLGKVAACALMLTGFFYYQLTPAMKLEGYMSLSSSDADTSPHNSSDDDSRDYDSLEKNCRPSKNVANGDYDVKPSRLQSGVLRTNCIDCLDRTNVAQYAYGWAALGQQLHALGIRDAPTIELDDPLSSTLMGLYERMGDTLAYQYGGSAAHNKVFSERRGQWRAATQSQEFLRTLQRYYNNAYMDADKQDAINIFLGTFRPEQGSQAVWELRSDSHSNGRSGEISMGEDEKFLVKRCLSDGNILHESHTPMSAMSRKNESISHRGFVSSHQVTRTHIISESSPDMPAAGDVTLSRCTPSMPSTHFFGDVQKVQHNGSSSIYLSEQEDMSSVSNFVDIEWLSSSENLCENDHLSRPSALTIYSTAETSSSENIITEVKQLTPAMRESGSSSRKGKEPVETELSVHTKIRDDFPDSFKQWVAYGEALCH.

The SAC domain maps to 162–551; the sequence is LCMVDLTKDF…GDTLAYQYGG (390 aa). The segment at 439 to 475 is disordered; that stretch reads SDADTSPHNSSDDDSRDYDSLEKNCRPSKNVANGDYD. Positions 448–463 are enriched in basic and acidic residues; sequence SSDDDSRDYDSLEKNC. A Phosphatase catalytic core motif is present at residues 487–498; sequence RTNCIDCLDRTN. The interval 785 to 805 is disordered; sequence PAMRESGSSSRKGKEPVETEL. Positions 796 to 805 are enriched in basic and acidic residues; that stretch reads KGKEPVETEL.

Component of the PI(3,5)P2 regulatory complex at least composed of ATG18, SAC/FIG4, FAB1 and VAC14. It depends on Mg(2+) as a cofactor. Ubiquitous with a higher level of expression in young seedlings than in other tissues.

Its subcellular location is the vacuole membrane. It catalyses the reaction a 1,2-diacyl-sn-glycero-3-phospho-(1D-myo-inositol-3,5-bisphosphate) + H2O = a 1,2-diacyl-sn-glycero-3-phospho-(1D-myo-inositol-3-phosphate) + phosphate. Its function is as follows. The PI(3,5)P2 regulatory complex regulates both the synthesis and turnover of phosphatidylinositol 3,5-bisphosphate (PtdIns(3,5)P2). In Arabidopsis thaliana (Mouse-ear cress), this protein is Phosphoinositide phosphatase SAC4 (SAC4).